The following is a 203-amino-acid chain: N-(5'-phosphoribosyl)anthranilate isomerase (203 aa).

Belongs to the TrpF family.

It carries out the reaction N-(5-phospho-beta-D-ribosyl)anthranilate = 1-(2-carboxyphenylamino)-1-deoxy-D-ribulose 5-phosphate. It functions in the pathway amino-acid biosynthesis; L-tryptophan biosynthesis; L-tryptophan from chorismate: step 3/5. This Sulfurihydrogenibium sp. (strain YO3AOP1) protein is N-(5'-phosphoribosyl)anthranilate isomerase.